Consider the following 664-residue polypeptide: MVNPGHGRGPDSGTAAGGSNSDPFPANLRVLVVDDDPTCLMILERMLMTCLYRVTKCNRAESALSLLRKNKNGFDIVISDVHMPDMDGFKLLEHVGLEMDLPVIMMSADDSKSVVLKGVTHGAVDYLIKPVRIEALKNIWQHVVRKKRNEWNVSEHSGGSIEDTGGDRDRQQQHREDADNNSSSVNEGNGRSSRKRKEEEVDDQGDDKEDSSSLKKPRVVWSVELHQQFVAAVNQLGVDKAVPKKILEMMNVPGLTRENVASHLQKYRIYLRRLGGVSQHQGNMNHSFMTGQDQSFGPLSSLNGFDLQSLAVTGQLPPQSLAQLQAAGLGRPTLAKPGMSVSPLVDQRSIFNFENPKIRFGDGHGQTMNNGNLLHGVPTGSHMRLRPGQNVQSSGMMLPVADQLPRGGPSMLPSLGQQPILSSSVSRRSDLTGALAVRNSIPETNSRVLPTTHSVFNNFPADLPRSSFPLASAPGISVPVSVSYQEEVNSSDAKGGSSAATAGFGNPSYDIFNDFPQHQQHNKNISNKLNDWDLRNMGLVFSSNQDAATATATAAFSTSEAYSSSSTQRKRRETDATVVGEHGQNLQSPSRNLYHLNHVFMDGGSVRVKSERVAETVTCPPANTLFHEQYNQEDLMSAFLKQEGIPSVDNEFEFDGYSIDNIQV.

The segment at 1-21 (MVNPGHGRGPDSGTAAGGSNS) is disordered. A Response regulatory domain is found at 29–144 (RVLVVDDDPT…ALKNIWQHVV (116 aa)). Asp-80 is subject to 4-aspartylphosphate. A disordered region spans residues 151–215 (WNVSEHSGGS…DDKEDSSSLK (65 aa)). A compositionally biased stretch (basic and acidic residues) spans 165 to 178 (GGDRDRQQQHREDA). Positions 180–191 (NNSSSVNEGNGR) are enriched in polar residues. Residues 200–209 (EVDDQGDDKE) show a composition bias toward acidic residues. A Nuclear localization signal motif is present at residues 215-218 (KKPR). The myb-like GARP DNA-binding region spans 218-268 (RVVWSVELHQQFVAAVNQLGVDKAVPKKILEMMNVPGLTRENVASHLQKYR). Positions 554-567 (AAFSTSEAYSSSST) are enriched in low complexity. A disordered region spans residues 554-589 (AAFSTSEAYSSSSTQRKRRETDATVVGEHGQNLQSP).

Belongs to the ARR family. Type-B subfamily. In terms of assembly, binds the target DNA as a monomer. Interacts with histidine-containing phosphotransfer proteins. In terms of processing, two-component system major event consists of a His-to-Asp phosphorelay between a sensor histidine kinase (HK) and a response regulator (RR). In plants, the His-to-Asp phosphorelay involves an additional intermediate named Histidine-containing phosphotransfer protein (HPt). This multistep phosphorelay consists of a His-Asp-His-Asp sequential transfer of a phosphate group between first a His and an Asp of the HK protein, followed by the transfer to a conserved His of the HPt protein and finally the transfer to an Asp in the receiver domain of the RR protein. Phosphorylated in response to cytokinin mediated by AHK3. As to expression, detected in the whole plant. Predominantly expressed in pollen.

The protein resides in the nucleus. Transcriptional activator that binds specifically to the DNA sequence 5'-[AG]GATT-3'. Functions as a response regulator involved in His-to-Asp phosphorelay signal transduction system. Phosphorylation of the Asp residue in the receiver domain activates the ability of the protein to promote the transcription of target genes. Could directly activate some type-A response regulators in response to cytokinins. Involved in the expression of nuclear genes for components of mitochondrial complex I. Promotes cytokinin-mediated leaf longevity. Involved in the ethylene signaling pathway in an ETR1-dependent manner and in the cytokinin signaling pathway. This chain is Two-component response regulator ARR2 (ARR2), found in Arabidopsis thaliana (Mouse-ear cress).